Here is a 297-residue protein sequence, read N- to C-terminus: Acetyl-coenzyme A carboxylase carboxyl transferase subunit beta (297 aa).

The tract at residues 1 to 23 is disordered; sequence MSWIERILGRTSSSSSSSKSKVP. A CoA carboxyltransferase N-terminal domain is found at 26–295; the sequence is VWTKCTSCEQ…PFKTAELIVE (270 aa). Zn(2+) is bound by residues C30, C33, C49, and C52. The C4-type zinc-finger motif lies at 30–52; the sequence is CTSCEQVLYSEELKRNMHVCPKC.

The protein belongs to the AccD/PCCB family. Acetyl-CoA carboxylase is a heterohexamer composed of biotin carboxyl carrier protein (AccB), biotin carboxylase (AccC) and two subunits each of ACCase subunit alpha (AccA) and ACCase subunit beta (AccD). Zn(2+) is required as a cofactor.

Its subcellular location is the cytoplasm. It catalyses the reaction N(6)-carboxybiotinyl-L-lysyl-[protein] + acetyl-CoA = N(6)-biotinyl-L-lysyl-[protein] + malonyl-CoA. It participates in lipid metabolism; malonyl-CoA biosynthesis; malonyl-CoA from acetyl-CoA: step 1/1. In terms of biological role, component of the acetyl coenzyme A carboxylase (ACC) complex. Biotin carboxylase (BC) catalyzes the carboxylation of biotin on its carrier protein (BCCP) and then the CO(2) group is transferred by the transcarboxylase to acetyl-CoA to form malonyl-CoA. The protein is Acetyl-coenzyme A carboxylase carboxyl transferase subunit beta of Actinobacillus pleuropneumoniae serotype 7 (strain AP76).